The primary structure comprises 412 residues: MSRHLWKNQLSEMVQPSGGPAEDQDMLGEESSLGKPAMLHLPSEQGTPETLQRCLEENQELRDAIRQSNQMLRERCEELLHFQVSQREEKEFLMCKFQEARKLVERLSLEKLDLRRQREQALEDLEHLKKCQQQMAEDKASVKAQVTSLLGELQESQSRLEAATKERQTLEGRIRAVSEQVRQLESEREVLQQQHSVQVDQLRMQNQSVEAALRMERQAASEEKRKLAQLQAAYHQLFQDYDSHIKSSKGMQLEDLRQQLQQAEEALVAKQELIDKLKEEAEQHKIVMETVPVLKAQADIYKADFQAERHAREKLVERKELLQEQLEQLQREFNKLKVGCHESARIEDMRKRHVETSQPPLLPAPAHHSFHLALSNQRRSPPEEPPDFCCPKCQYQAPDMDTLQIHVMECIE.

The segment at 1–48 (MSRHLWKNQLSEMVQPSGGPAEDQDMLGEESSLGKPAMLHLPSEQGTP) is disordered. The required for interaction with and ubiquitination by MARCHF2 stretch occupies residues 1-197 (MSRHLWKNQL…REVLQQQHSV (197 aa)). Phosphoserine; by IKKB occurs at positions 31 and 43. The tract at residues 44 to 111 (EQGTPETLQR…KLVERLSLEK (68 aa)) is interaction with CHUK/IKBKB. The stretch at 49–343 (ETLQRCLEEN…NKLKVGCHES (295 aa)) forms a coiled coil. Residue Ser-68 is modified to Phosphoserine. Ser-85 bears the Phosphoserine; by ATM mark. Residues Lys-111, Lys-139, Lys-143, Lys-226, and Lys-246 each participate in a glycyl lysine isopeptide (Lys-Gly) (interchain with G-Cter in ubiquitin) cross-link. An interaction with TANK region spans residues 150–250 (LGELQESQSR…YDSHIKSSKG (101 aa)). A ubiquitin-binding (UBAN) region spans residues 242–343 (DSHIKSSKGM…NKLKVGCHES (102 aa)). A self-association region spans residues 246–358 (KSSKGMQLED…MRKRHVETSQ (113 aa)). Residues 249-412 (KGMQLEDLRQ…LQIHVMECIE (164 aa)) form a required for interaction with TNFAIP3 region. Lys-270 participates in a covalent cross-link: Glycyl lysine isopeptide (Lys-Gly) (interchain with G-Cter in SUMO); alternate. A Glycyl lysine isopeptide (Lys-Gly) (interchain with G-Cter in ubiquitin); alternate cross-link involves residue Lys-270. Residues Lys-276, Lys-278, Lys-285, and Lys-295 each participate in a glycyl lysine isopeptide (Lys-Gly) (interchain with G-Cter in ubiquitin) cross-link. Lys-302 is covalently cross-linked (Glycyl lysine isopeptide (Lys-Gly) (interchain with G-Cter in SUMO); alternate). Lys-302 participates in a covalent cross-link: Glycyl lysine isopeptide (Lys-Gly) (interchain with G-Cter in ubiquitin); alternate. Glycyl lysine isopeptide (Lys-Gly) (interchain with G-Cter in ubiquitin) cross-links involve residues Lys-314 and Lys-319. The segment at 315–336 (LVERKELLQEQLEQLQREFNKL) is leucine-zipper. Ser-369 is modified (phosphoserine; by IKKB). Residues 375 to 412 (SNQRRSPPEEPPDFCCPKCQYQAPDMDTLQIHVMECIE) form an interaction with CYLD region. A Phosphoserine modification is found at Ser-380. The segment at 382-412 (PEEPPDFCCPKCQYQAPDMDTLQIHVMECIE) adopts a CCHC NOA-type zinc-finger fold. Cys-390 lines the Zn(2+) pocket. Lys-392 is covalently cross-linked (Glycyl lysine isopeptide (Lys-Gly) (interchain with G-Cter in ubiquitin)). Zn(2+) contacts are provided by Cys-393, His-406, and Cys-410.

As to quaternary structure, homodimer; disulfide-linked. Component of the I-kappa-B-kinase (IKK) core complex consisting of CHUK, IKBKB and IKBKG; probably four alpha/CHUK-beta/IKBKB dimers are associated with four gamma/IKBKG subunits. The IKK core complex seems to associate with regulatory or adapter proteins to form a IKK-signalosome holo-complex. The IKK complex associates with TERF2IP/RAP1, leading to promote IKK-mediated phosphorylation of RELA/p65. Part of a complex composed of NCOA2, NCOA3, CHUK/IKKA, IKBKB, IKBKG and CREBBP. Interacts with COPS3, CYLD, NALP2, TRPC4AP and PIDD1. Interacts with ATM; the complex is exported from the nucleus. Interacts with TRAF6. Interacts with IKBKE. Interacts with TANK; the interaction is enhanced by IKBKE and TBK1. Part of a ternary complex consisting of TANK, IKBKB and IKBKG. Interacts with ZFAND5. Interacts with RIPK2. Interacts with TNIP1 and TNFAIP3; TNIP1 facilitates the TNFAIP3-mediated de-ubiquitination of IKBKG. Interacts with TNFAIP3; the interaction is induced by TNF stimulation and by polyubiquitin. Binds (via UBAN region) polyubiquitin; binds both 'Lys-63'-linked and linear polyubiquitin, with higher affinity for linear ubiquitin. Interacts with NLRP10. Interacts with TANK; this interaction increases in response to DNA damage. Interacts with USP10; this interaction increases in response to DNA damage. Interacts with ZC3H12A; this interaction increases in response to DNA damage. Interacts with IFIT5; the interaction synergizes the recruitment of IKK to MAP3K7 and enhances IKK phosphorylation. Interacts with TRIM29; this interaction induces IKBKG/NEMO ubiquitination and proteolytic degradation. Interacts with TRIM13; this interaction leads to IKBKG/NEMO ubiquitination. Interacts with ARFIP2. Interacts with RIPK1. Interacts with (ubiquitinated) BCL10; interaction with polyubiquitinated BCL10 via both 'Lys-63'-linked and linear ubiquitin is required for TCR-induced NF-kappa-B activation. Interacts with MARCHF2; during the late stages of macrophage viral and bacterial infection; the interaction leads to ubiquitination and degradation of IKBKG/NEMO. In terms of processing, phosphorylation at Ser-68 attenuates aminoterminal homodimerization. Polyubiquitinated on Lys-278 via 'Lys-63'-linked ubiquitin; the ubiquitination is mediated downstream of NOD2 and RIPK2 and probably plays a role in signaling by facilitating interactions with ubiquitin domain-containing proteins and activates the NF-kappa-B pathway. Polyubiquitinated on Lys-278 and Lys-302 through 'Lys-63'-linked ubiquitin; the ubiquitination is mediated by BCL10, MALT1 and TRAF6 and probably plays a role in signaling by facilitating interactions with ubiquitin domain-containing proteins and activates the NF-kappa-B pathway. Monoubiquitinated on Lys-270 and Lys-302; promotes nuclear export. Polyubiquitinated through 'Lys-27' by TRIM23; involved in antiviral innate and inflammatory responses. Linear polyubiquitinated on Lys-111, Lys-143, Lys-226, Lys-246, Lys-270, Lys-278, Lys-285, Lys-295, Lys-302 and Lys-319; the head-to-tail polyubiquitination is mediated by the LUBAC complex and plays a key role in NF-kappa-B activation. Deubiquitinated by USP10 in a TANK-dependent and -independent manner, leading to the negative regulation of NF-kappa-B signaling upon DNA damage. Ubiquitinated at Lys-319 by MARCHF2 following bacterial and viral infection which leads to its degradation. Polyubiquitinated via 'Lys-29'-linked ubiquitin; leading to lysosomal degradation. Post-translationally, sumoylated on Lys-270 and Lys-302 with SUMO1; the modification results in phosphorylation of Ser-85 by ATM leading to a replacement of the sumoylation by mono-ubiquitination on these residues. In terms of processing, neddylated by TRIM40, resulting in stabilization of NFKBIA and down-regulation of NF-kappa-B activity.

The protein resides in the cytoplasm. Its subcellular location is the nucleus. Its function is as follows. Regulatory subunit of the IKK core complex which phosphorylates inhibitors of NF-kappa-B thus leading to the dissociation of the inhibitor/NF-kappa-B complex and ultimately the degradation of the inhibitor. Its binding to scaffolding polyubiquitin plays a key role in IKK activation by multiple signaling receptor pathways. Can recognize and bind both 'Lys-63'-linked and linear polyubiquitin upon cell stimulation, with a much highr affinity for linear polyubiquitin. Could be implicated in NF-kappa-B-mediated protection from cytokine toxicity. Essential for viral activation of IRF3. Involved in TLR3- and IFIH1-mediated antiviral innate response; this function requires 'Lys-27'-linked polyubiquitination. This is NF-kappa-B essential modulator (Ikbkg) from Rattus norvegicus (Rat).